The following is a 23-amino-acid chain: Alyteserin-1d (23 aa).

Asn-23 is subject to Asparagine amide.

In terms of tissue distribution, expressed by the skin glands.

The protein resides in the secreted. The protein localises to the target cell membrane. In terms of biological role, antibacterial peptide with amphipathic alpha-helical structure. Shows selective growth inhibitory activity against the Gram-negative bacteria E.coli (MIC=25 uM) Has a weak hemolytic activity against human erythrocytes (LC(50)&gt;100 uM). Is very weakly active against S.aureus (MIC=200 uM). This chain is Alyteserin-1d, found in Alytes obstetricans (Common midwife toad).